A 278-amino-acid chain; its full sequence is Coiled-coil domain-containing protein 121 (278 aa).

Coiled-coil stretches lie at residues 1 to 30 and 105 to 243; these read MTDL…REKL and QAMR…LIQA. A disordered region spans residues 253-278; that stretch reads QCLNRQDVPKTTPSLPQGTKSRINPK.

The protein is Coiled-coil domain-containing protein 121 (CCDC121) of Homo sapiens (Human).